The primary structure comprises 184 residues: UPF0397 protein SAR2767 (184 aa).

5 helical membrane-spanning segments follow: residues Val-11–Pro-31, Ala-44–Ile-64, Ala-77–Leu-97, Gly-117–Ile-137, and Gln-148–Leu-168.

It belongs to the UPF0397 family.

Its subcellular location is the cell membrane. In Staphylococcus aureus (strain MRSA252), this protein is UPF0397 protein SAR2767.